We begin with the raw amino-acid sequence, 273 residues long: Flagellin FljN (273 aa).

The protein belongs to the bacterial flagellin family. In terms of assembly, in C.crescentus, the flagellar filament is composed of multiple flagellins of 29 kDa; 27 kDa and 25 kDa.

It is found in the secreted. It localises to the bacterial flagellum. Functionally, flagellin is the subunit protein which polymerizes to form the filaments of bacterial flagella. The polypeptide is Flagellin FljN (fljN) (Caulobacter vibrioides (strain ATCC 19089 / CIP 103742 / CB 15) (Caulobacter crescentus)).